We begin with the raw amino-acid sequence, 1045 residues long: FERM, ARHGEF and pleckstrin domain-containing protein 1 (1045 aa).

The segment at M1–G37 is disordered. 2 positions are modified to phosphoserine: S20 and S23. T24 carries the post-translational modification Phosphothreonine. The 281-residue stretch at V40–E320 folds into the FERM domain. Residues S340, S373, S389, S403, S418, S427, and S433 each carry the phosphoserine modification. The interval S392–K534 is disordered. Polar residues-rich tracts occupy residues T471–G489 and V496–P511. Phosphoserine occurs at positions 510 and 514. One can recognise a DH domain in the interval K540–T730. The region spanning E759–D856 is the PH 1 domain. A phosphoserine mark is found at S833, S872, and S878. The tract at residues P866 to R902 is disordered. T883 is subject to Phosphothreonine. Phosphoserine is present on residues S889, S896, and S899. Positions E932 to S1029 constitute a PH 2 domain.

In terms of assembly, interacts with CADM1. Interacts with RAC1.

The protein localises to the cell membrane. It is found in the synapse. Its subcellular location is the synaptosome. It localises to the cytoplasm. The protein resides in the cytosol. The protein localises to the cell projection. It is found in the filopodium. Its subcellular location is the dendrite. It localises to the dendritic spine. Functions as a guanine nucleotide exchange factor for RAC1. May play a role in semaphorin signaling. Plays a role in the assembly and disassembly of dendritic filopodia, the formation of dendritic spines, regulation of dendrite length and ultimately the formation of synapses. In Pongo abelii (Sumatran orangutan), this protein is FERM, ARHGEF and pleckstrin domain-containing protein 1 (FARP1).